A 425-amino-acid chain; its full sequence is Serine--tRNA ligase (425 aa).

An L-serine-binding site is contributed by 232–234 (TAE). ATP is bound by residues 263–265 (RRE) and V279. Residue E286 participates in L-serine binding. 350-353 (EVVS) contributes to the ATP binding site. T387 contributes to the L-serine binding site.

Belongs to the class-II aminoacyl-tRNA synthetase family. Type-1 seryl-tRNA synthetase subfamily. In terms of assembly, homodimer. The tRNA molecule binds across the dimer.

It localises to the cytoplasm. The enzyme catalyses tRNA(Ser) + L-serine + ATP = L-seryl-tRNA(Ser) + AMP + diphosphate + H(+). It carries out the reaction tRNA(Sec) + L-serine + ATP = L-seryl-tRNA(Sec) + AMP + diphosphate + H(+). It participates in aminoacyl-tRNA biosynthesis; selenocysteinyl-tRNA(Sec) biosynthesis; L-seryl-tRNA(Sec) from L-serine and tRNA(Sec): step 1/1. In terms of biological role, catalyzes the attachment of serine to tRNA(Ser). Is also able to aminoacylate tRNA(Sec) with serine, to form the misacylated tRNA L-seryl-tRNA(Sec), which will be further converted into selenocysteinyl-tRNA(Sec). In Methanocorpusculum labreanum (strain ATCC 43576 / DSM 4855 / Z), this protein is Serine--tRNA ligase.